The sequence spans 240 residues: Probable transcriptional regulatory protein HPAG1_0159 (240 aa).

This sequence belongs to the TACO1 family.

The protein localises to the cytoplasm. In Helicobacter pylori (strain HPAG1), this protein is Probable transcriptional regulatory protein HPAG1_0159.